We begin with the raw amino-acid sequence, 971 residues long: Translation initiation factor IF-2 (971 aa).

Basic and acidic residues predominate over residues Asp-48–Lys-63. Disordered regions lie at residues Asp-48–Ile-86 and Asp-101–Gln-381. The segment covering Gly-105–Ala-114 has biased composition (low complexity). Residues Glu-121–Ala-181 are compositionally biased toward basic and acidic residues. The span at Ala-182 to Thr-203 shows a compositional bias: low complexity. The span at Asp-210 to Arg-261 shows a compositional bias: basic and acidic residues. Residues Pro-277–Pro-286 are compositionally biased toward pro residues. The segment covering Ala-304–Ala-326 has biased composition (low complexity). Positions Ser-356–Lys-369 are enriched in gly residues. The tr-type G domain occupies Pro-471–Lys-640. The G1 stretch occupies residues Gly-480–Thr-487. Gly-480–Thr-487 is a GTP binding site. A G2 region spans residues Gly-505 to His-509. The segment at Asp-526–Gly-529 is G3. GTP-binding positions include Asp-526–His-530 and Asn-580–Asp-583. The segment at Asn-580–Asp-583 is G4. The G5 stretch occupies residues Ser-616–Lys-618.

It belongs to the TRAFAC class translation factor GTPase superfamily. Classic translation factor GTPase family. IF-2 subfamily.

Its subcellular location is the cytoplasm. Its function is as follows. One of the essential components for the initiation of protein synthesis. Protects formylmethionyl-tRNA from spontaneous hydrolysis and promotes its binding to the 30S ribosomal subunits. Also involved in the hydrolysis of GTP during the formation of the 70S ribosomal complex. The sequence is that of Translation initiation factor IF-2 from Burkholderia orbicola (strain MC0-3).